A 591-amino-acid chain; its full sequence is Acyl-CoA-dependent acyltransferase MAC1 (591 aa).

The peroxisomal targeting signal type 1 stretch occupies residues 589–591 (ARL).

This sequence belongs to the trichothecene O-acetyltransferase family.

It is found in the peroxisome. Its pathway is secondary metabolite biosynthesis. Acyl-CoA-dependent acyltransferase; part of the gene cluster that mediates the biosynthesis of mannosylerythritol lipids (MELs), surface-active substances that enhance the availability of water-insoluble substrates. Mannosylerythritol lipid production is responsible for hemolytic activity of Ustilago maydis. Depending on the number of acetyl groups, mannosylerythritol lipids can be differentiated into MEL A (fully acetylated), MEL B and MEL C (monoacetylated at R-6 and R-4, respectively), and the fully deacetylated MEL D. The first step in the pathway is the generation of mannosylerythritol by the glycosyltransferase EMT1 which catalyzes the transfer of GDP-mannose to the C-4 atom of meso-erythritol. This reaction has to be stereospecific, since only mannosyl-D-erythritol is generated. The produced disaccharide is subsequently acylated with fatty acids of various lengths derived from the peroxisomal beta-oxidation by the peroxisomal acyltransferases MAC1 and MAC2 at positions C-2 and C-3, repectively. The existence of MEL derivatives which carry an acetyl group at C-2 implies that at least MAC1 also accepts acetyl-CoA as a donor. The final step of MEL biosynthesis is the acetylation of the fully acylated mannosylerythritol lipids catalyzed by the acetyl-CoA-dependent acetyltransferase MAT1. MAT1 displays a relaxed regioselectivity and is able to transfer acetylgroups to both positions C-4 and C-6 of the mannosyl moiety. This chain is Acyl-CoA-dependent acyltransferase MAC1, found in Mycosarcoma maydis (Corn smut fungus).